The following is a 249-amino-acid chain: General transcription factor IIF subunit 2 (249 aa).

Ala2 carries the post-translational modification N-acetylalanine. N6-acetyllysine occurs at positions 22, 33, and 137. Ser142 carries the phosphoserine modification. Residues Gly227 and His229 each contribute to the DNA site. A Phosphoserine modification is found at Ser248.

The protein belongs to the TFIIF beta subunit family. As to quaternary structure, heterodimer of an alpha and a beta subunit. Interacts with HTATSF1 and GPBP1. Interacts with URI1. Interacts with GTF2B (via N-terminus); this interaction is inhibited in presence of GTF2F1. Part of TBP-based Pol II pre-initiation complex (PIC), in which Pol II core assembles with general transcription factors and other specific initiation factors including GTF2E1, GTF2E2, GTF2F1, GTF2F2, TCEA1, ERCC2, ERCC3, GTF2H2, GTF2H3, GTF2H4, GTF2H5, GTF2A1, GTF2A2, GTF2B and TBP; this large multi-subunit PIC complex mediates DNA unwinding and targets Pol II core to the transcription start site where the first phosphodiester bond forms.

The protein localises to the nucleus. Functionally, TFIIF is a general transcription initiation factor that binds to RNA polymerase II and helps to recruit it to the initiation complex in collaboration with TFIIB. It promotes transcription elongation. The polypeptide is General transcription factor IIF subunit 2 (Gtf2f2) (Rattus norvegicus (Rat)).